A 607-amino-acid polypeptide reads, in one-letter code: ATP-dependent rRNA helicase SPB4 (607 aa).

A Q motif motif is present at residues 7–35 (WDDLEYPIQPWIRSAVDVMGFENMTPVQA). The Helicase ATP-binding domain maps to 38 to 224 (IPLFARNKDV…KTGLRNPVKV (187 aa)). 51–58 (SVTGSGKT) contributes to the ATP binding site. The DEAD box signature appears at 172 to 175 (DEAD). Positions 248-404 (KLEQVISIIN…EISLDIVNLP (157 aa)) constitute a Helicase C-terminal domain. A disordered region spans residues 527 to 607 (KSELKKKNMS…NGMQGSFDDL (81 aa)). Positions 529 to 565 (ELKKKNMSWSNNTQSKEEKVERRTKMALKRKRIEEEL) form a coiled coil. 2 stretches are compositionally biased toward basic and acidic residues: residues 543–552 (SKEEKVERRT) and 560–570 (RIEEELSKEAD). Over residues 587–601 (ILQNKKSKNSNNGMQ) the composition is skewed to polar residues.

This sequence belongs to the DEAD box helicase family. DDX55/SPB4 subfamily. In terms of assembly, component of pre-60S ribosomal complexes.

It localises to the nucleus. The protein localises to the nucleolus. The enzyme catalyses ATP + H2O = ADP + phosphate + H(+). Its function is as follows. ATP-binding RNA helicase involved in the biogenesis of 60S ribosomal subunits. Binds 90S pre-ribosomal particles and dissociates from pre-60S ribosomal particles after processing of 27SB pre-rRNA. Required for the normal formation of 18S rRNA through the processing of pre-rRNAs at sites A0, A1 and A2, and the normal formation of 25S and 5.8S rRNAs through the processing of pre-rRNAs at sites C1 and C2. This Vanderwaltozyma polyspora (strain ATCC 22028 / DSM 70294 / BCRC 21397 / CBS 2163 / NBRC 10782 / NRRL Y-8283 / UCD 57-17) (Kluyveromyces polysporus) protein is ATP-dependent rRNA helicase SPB4.